Reading from the N-terminus, the 351-residue chain is Large ribosomal subunit protein uL3 (351 aa).

2 disordered regions span residues 1 to 31 (MGHR…TPRT) and 246 to 271 (KGSR…GQLG).

The protein belongs to the universal ribosomal protein uL3 family. Part of the 50S ribosomal subunit. Forms a cluster with proteins L14 and L24e.

In terms of biological role, one of the primary rRNA binding proteins, it binds directly near the 3'-end of the 23S rRNA, where it nucleates assembly of the 50S subunit. In Saccharolobus islandicus (strain Y.N.15.51 / Yellowstone #2) (Sulfolobus islandicus), this protein is Large ribosomal subunit protein uL3.